Here is an 876-residue protein sequence, read N- to C-terminus: Alanine--tRNA ligase (876 aa).

Zn(2+) is bound by residues H562, H566, C666, and H670.

It belongs to the class-II aminoacyl-tRNA synthetase family. Zn(2+) serves as cofactor.

It is found in the cytoplasm. The enzyme catalyses tRNA(Ala) + L-alanine + ATP = L-alanyl-tRNA(Ala) + AMP + diphosphate. In terms of biological role, catalyzes the attachment of alanine to tRNA(Ala) in a two-step reaction: alanine is first activated by ATP to form Ala-AMP and then transferred to the acceptor end of tRNA(Ala). Also edits incorrectly charged Ser-tRNA(Ala) and Gly-tRNA(Ala) via its editing domain. This chain is Alanine--tRNA ligase, found in Marinobacter nauticus (strain ATCC 700491 / DSM 11845 / VT8) (Marinobacter aquaeolei).